Reading from the N-terminus, the 916-residue chain is Protein translocase subunit SecA (916 aa).

Residues Gln-87, 105-109 (GEGKT), and Asp-507 each bind ATP. The Zn(2+) site is built by Cys-900, Cys-902, Cys-911, and His-912.

This sequence belongs to the SecA family. In terms of assembly, monomer and homodimer. Part of the essential Sec protein translocation apparatus which comprises SecA, SecYEG and auxiliary proteins SecDF-YajC and YidC. Zn(2+) is required as a cofactor.

It is found in the cell inner membrane. The protein localises to the cytoplasm. It carries out the reaction ATP + H2O + cellular proteinSide 1 = ADP + phosphate + cellular proteinSide 2.. Functionally, part of the Sec protein translocase complex. Interacts with the SecYEG preprotein conducting channel. Has a central role in coupling the hydrolysis of ATP to the transfer of proteins into and across the cell membrane, serving both as a receptor for the preprotein-SecB complex and as an ATP-driven molecular motor driving the stepwise translocation of polypeptide chains across the membrane. This is Protein translocase subunit SecA from Neisseria meningitidis serogroup B (strain ATCC BAA-335 / MC58).